We begin with the raw amino-acid sequence, 68 residues long: C-hordein (68 aa).

2 stretches are compositionally biased toward pro residues: residues 1–24 and 33–55; these read YPQQ…PQQP and PQQP…PLQP. The segment at 1–68 is disordered; the sequence is YPQQPQPFPQ…YTQQTIWSMV (68 aa). The span at 59-68 shows a compositional bias: polar residues; it reads YTQQTIWSMV.

As to expression, developing endosperm.

Its function is as follows. Sulfur-poor seed storage protein. The chain is C-hordein from Hordeum vulgare (Barley).